A 217-amino-acid polypeptide reads, in one-letter code: UDP-N-acetylglucosamine transferase subunit ALG14 (217 aa).

The Lumenal portion of the chain corresponds to 1–3 (MLS). The chain crosses the membrane as a helical span at residues 4–26 (ILILAATAAGLVILLFQRLWTVL). Residues 27-217 (GPHHVTPRES…PKSVYLGRIV (191 aa)) are Cytoplasmic-facing.

This sequence belongs to the ALG14 family. Forms with ALG13 the active heterodimeric UDP-N-acetylglucosamine transferase complex.

The protein resides in the endoplasmic reticulum membrane. Part of the UDP-N-acetylglucosamine transferase complex that operates in the biosynthetic pathway of dolichol-linked oligosaccharides, the glycan precursors employed in protein asparagine (N)-glycosylation. The assembly of dolichol-linked oligosaccharides begins on the cytosolic side of the endoplasmic reticulum membrane and finishes in its lumen. The sequential addition of sugars to dolichol pyrophosphate produces dolichol-linked oligosaccharides containing fourteen sugars, including two GlcNAcs, nine mannoses and three glucoses. Once assembled, the oligosaccharides are transferred from the lipid to nascent proteins by oligosaccharyltransferases. Functions as a protein-membrane adapter recruiting ALG13 at the cytoplasmic face of the endoplasmic reticulum, where the complex catalyzes the second step of dolichol pyrophosphate biosynthesis, transferring a beta1,4-linked N-acetylglucosamine (GlcNAc) from UDP-GlcNAc to GlcNAc-pyrophosphatedolichol (Gn-PDol) to produce N,N'-diacetylchitobiosyl diphosphodolichol. N,N'-diacetylchitobiosyl diphosphodolichol is a substrate for ALG1, the following enzyme in the biosynthetic pathway. The protein is UDP-N-acetylglucosamine transferase subunit ALG14 of Mus musculus (Mouse).